A 359-amino-acid polypeptide reads, in one-letter code: DNA replication and repair protein RecF (359 aa).

30–37 contributes to the ATP binding site; sequence GKNGIGKT.

The protein belongs to the RecF family.

It is found in the cytoplasm. In terms of biological role, the RecF protein is involved in DNA metabolism; it is required for DNA replication and normal SOS inducibility. RecF binds preferentially to single-stranded, linear DNA. It also seems to bind ATP. This Flavobacterium johnsoniae (strain ATCC 17061 / DSM 2064 / JCM 8514 / BCRC 14874 / CCUG 350202 / NBRC 14942 / NCIMB 11054 / UW101) (Cytophaga johnsonae) protein is DNA replication and repair protein RecF.